Consider the following 450-residue polypeptide: Tubulin alpha-1 chain (450 aa).

The GTP site is built by Gln11, Glu71, Gly144, Thr145, Thr179, Asn206, and Asn228. Glu71 provides a ligand contact to Mg(2+). Residue Glu254 is part of the active site.

The protein belongs to the tubulin family. As to quaternary structure, dimer of alpha and beta chains. A typical microtubule is a hollow water-filled tube with an outer diameter of 25 nm and an inner diameter of 15 nM. Alpha-beta heterodimers associate head-to-tail to form protofilaments running lengthwise along the microtubule wall with the beta-tubulin subunit facing the microtubule plus end conferring a structural polarity. Microtubules usually have 13 protofilaments but different protofilament numbers can be found in some organisms and specialized cells. Mg(2+) is required as a cofactor. Post-translationally, undergoes a tyrosination/detyrosination cycle, the cyclic removal and re-addition of a C-terminal tyrosine residue by the enzymes tubulin tyrosine carboxypeptidase (TTCP) and tubulin tyrosine ligase (TTL), respectively.

The protein resides in the cytoplasm. Its subcellular location is the cytoskeleton. The enzyme catalyses GTP + H2O = GDP + phosphate + H(+). Tubulin is the major constituent of microtubules, a cylinder consisting of laterally associated linear protofilaments composed of alpha- and beta-tubulin heterodimers. Microtubules grow by the addition of GTP-tubulin dimers to the microtubule end, where a stabilizing cap forms. Below the cap, tubulin dimers are in GDP-bound state, owing to GTPase activity of alpha-tubulin. The chain is Tubulin alpha-1 chain (TUBA1) from Oryza sativa subsp. japonica (Rice).